Consider the following 254-residue polypeptide: Large ribosomal subunit protein uL2 (254 aa).

This sequence belongs to the universal ribosomal protein uL2 family. As to quaternary structure, component of the large ribosomal subunit. Mature ribosomes consist of a small (40S) and a large (60S) subunit. The 40S subunit contains about 32 different proteins and 1 molecule of RNA (18S). The 60S subunit contains 45 different proteins and 3 molecules of RNA (25S, 5.8S and 5S).

The protein localises to the cytoplasm. Functionally, component of the ribosome, a large ribonucleoprotein complex responsible for the synthesis of proteins in the cell. The small ribosomal subunit (SSU) binds messenger RNAs (mRNAs) and translates the encoded message by selecting cognate aminoacyl-transfer RNA (tRNA) molecules. The large subunit (LSU) contains the ribosomal catalytic site termed the peptidyl transferase center (PTC), which catalyzes the formation of peptide bonds, thereby polymerizing the amino acids delivered by tRNAs into a polypeptide chain. The nascent polypeptides leave the ribosome through a tunnel in the LSU and interact with protein factors that function in enzymatic processing, targeting, and the membrane insertion of nascent chains at the exit of the ribosomal tunnel. This Candida albicans (strain SC5314 / ATCC MYA-2876) (Yeast) protein is Large ribosomal subunit protein uL2.